Reading from the N-terminus, the 355-residue chain is Nicotinate-nucleotide--dimethylbenzimidazole phosphoribosyltransferase (355 aa).

Glu-321 serves as the catalytic Proton acceptor.

This sequence belongs to the CobT family.

The catalysed reaction is 5,6-dimethylbenzimidazole + nicotinate beta-D-ribonucleotide = alpha-ribazole 5'-phosphate + nicotinate + H(+). It participates in nucleoside biosynthesis; alpha-ribazole biosynthesis; alpha-ribazole from 5,6-dimethylbenzimidazole: step 1/2. Its function is as follows. Catalyzes the synthesis of alpha-ribazole-5'-phosphate from nicotinate mononucleotide (NAMN) and 5,6-dimethylbenzimidazole (DMB). The sequence is that of Nicotinate-nucleotide--dimethylbenzimidazole phosphoribosyltransferase from Desulfotalea psychrophila (strain LSv54 / DSM 12343).